Here is a 427-residue protein sequence, read N- to C-terminus: Histidinol dehydrogenase (427 aa).

Substrate-binding residues include S232, Q254, and H257. Positions 254 and 257 each coordinate Zn(2+). Residues E322 and H323 each act as proton acceptor in the active site. Substrate is bound by residues H323, D356, E410, and H415. D356 is a Zn(2+) binding site. Residue H415 participates in Zn(2+) binding.

It belongs to the histidinol dehydrogenase family. Requires Zn(2+) as cofactor.

The catalysed reaction is L-histidinol + 2 NAD(+) + H2O = L-histidine + 2 NADH + 3 H(+). The protein operates within amino-acid biosynthesis; L-histidine biosynthesis; L-histidine from 5-phospho-alpha-D-ribose 1-diphosphate: step 9/9. Functionally, catalyzes the sequential NAD-dependent oxidations of L-histidinol to L-histidinaldehyde and then to L-histidine. This is Histidinol dehydrogenase from Listeria innocua serovar 6a (strain ATCC BAA-680 / CLIP 11262).